The primary structure comprises 428 residues: Probable protein phosphatase 2C 12 (428 aa).

A PPM-type phosphatase domain is found at 24–293 (KIDNPELIHG…DDTTCIVVDI (270 aa)). Residues aspartate 69, glycine 70, aspartate 245, and aspartate 284 each coordinate Mn(2+). A disordered region spans residues 301–331 (ASVPPPKKQGKGMLKSMFKRKTSDSSSNIEK).

It belongs to the PP2C family. Mg(2+) is required as a cofactor. Requires Mn(2+) as cofactor.

The enzyme catalyses O-phospho-L-seryl-[protein] + H2O = L-seryl-[protein] + phosphate. It carries out the reaction O-phospho-L-threonyl-[protein] + H2O = L-threonyl-[protein] + phosphate. The sequence is that of Probable protein phosphatase 2C 12 from Arabidopsis thaliana (Mouse-ear cress).